The sequence spans 793 residues: Nuclear cap-binding protein subunit 1 (793 aa).

Positions 28 to 242 (EKKLQEVIGK…SLSAQIENLR (215 aa)) constitute an MIF4G domain.

The protein belongs to the NCBP1 family. As to quaternary structure, component of the nuclear cap-binding complex (CBC), a heterodimer composed of ncbp-1 and ncbp-1 that interacts with m7GpppG-capped RNA.

Its subcellular location is the nucleus. Its function is as follows. Component of the cap-binding complex (CBC), which binds cotranscriptionally to the 5'-cap of pre-mRNAs and is involved in various processes such as pre-mRNA splicing and RNA-mediated gene silencing (RNAi). The CBC complex is involved in miRNA-mediated RNA interference and is required for primary microRNAs (miRNAs) processing. In the CBC complex, ncbp-1 does not bind directly capped RNAs (m7GpppG-capped RNA) but is required to stabilize the movement of the N-terminal loop of ncbp-2 and lock the CBC into a high affinity cap-binding state with the cap structure. This Caenorhabditis briggsae protein is Nuclear cap-binding protein subunit 1 (ncbp-1).